Consider the following 165-residue polypeptide: Nucleotide-binding protein Ccur92_01650 (165 aa).

Belongs to the YajQ family.

Functionally, nucleotide-binding protein. The protein is Nucleotide-binding protein Ccur92_01650 of Campylobacter curvus (strain 525.92).